The chain runs to 96 residues: MEQPPEDQGPQREPYNEWTLELLEELKHEAVRHFPREWLHGLGQHIYNTYGDTWEGVEAIIRILQQLLFIHFRIGCHHSRIGIIRQRRIRNGSGRS.

Residues 1 to 42 (MEQPPEDQGPQREPYNEWTLELLEELKHEAVRHFPREWLHGL) are homooligomerization. Phosphoserine; by host is present on residues S79 and S96.

The protein belongs to the HIV-1 VPR protein family. In terms of assembly, homooligomer, may form homodimer. Interacts with p6-gag region of the Pr55 Gag precursor protein through a (Leu-X-X)4 motif near the C-terminus of the P6gag protein. Interacts with host UNG. May interact with host RAD23A/HHR23A. Interacts with host VPRBP/DCAF1, leading to hijack the CUL4A-RBX1-DDB1-DCAF1/VPRBP complex, mediating ubiquitination of host proteins such as TERT and ZGPAT and arrest of the cell cycle in G2 phase. In terms of processing, phosphorylated on several residues by host. These phosphorylations regulate VPR activity for the nuclear import of the HIV-1 pre-integration complex.

The protein resides in the virion. It localises to the host nucleus. The protein localises to the host extracellular space. During virus replication, may deplete host UNG protein, and incude G2-M cell cycle arrest. Acts by targeting specific host proteins for degradation by the 26S proteasome, through association with the cellular CUL4A-DDB1 E3 ligase complex by direct interaction with host VPRPB/DCAF-1. Cell cycle arrest reportedly occurs within hours of infection and is not blocked by antiviral agents, suggesting that it is initiated by the VPR carried into the virion. Additionally, VPR induces apoptosis in a cell cycle dependent manner suggesting that these two effects are mechanistically linked. Detected in the serum and cerebrospinal fluid of AIDS patient, VPR may also induce cell death to bystander cells. Its function is as follows. During virus entry, plays a role in the transport of the viral pre-integration (PIC) complex to the host nucleus. This function is crucial for viral infection of non-dividing macrophages. May act directly at the nuclear pore complex, by binding nucleoporins phenylalanine-glycine (FG)-repeat regions. This Homo sapiens (Human) protein is Protein Vpr.